Here is a 455-residue protein sequence, read N- to C-terminus: tRNA modification GTPase MnmE (455 aa).

(6S)-5-formyl-5,6,7,8-tetrahydrofolate is bound by residues R23, E85, and R124. The TrmE-type G domain occupies 220 to 375; that stretch reads GVSVVIAGKP…LQDAIFEAFI (156 aa). N230 provides a ligand contact to K(+). GTP is bound by residues 230 to 235, 249 to 255, and 274 to 277; these read NVGKSS, TSVPGTT, and DTAG. A Mg(2+)-binding site is contributed by S234. 3 residues coordinate K(+): T249, V251, and T254. T255 lines the Mg(2+) pocket. K455 provides a ligand contact to (6S)-5-formyl-5,6,7,8-tetrahydrofolate.

Belongs to the TRAFAC class TrmE-Era-EngA-EngB-Septin-like GTPase superfamily. TrmE GTPase family. In terms of assembly, homodimer. Heterotetramer of two MnmE and two MnmG subunits. K(+) serves as cofactor.

It localises to the cytoplasm. Functionally, exhibits a very high intrinsic GTPase hydrolysis rate. Involved in the addition of a carboxymethylaminomethyl (cmnm) group at the wobble position (U34) of certain tRNAs, forming tRNA-cmnm(5)s(2)U34. This is tRNA modification GTPase MnmE from Geotalea uraniireducens (strain Rf4) (Geobacter uraniireducens).